Reading from the N-terminus, the 552-residue chain is WAP, Kazal, immunoglobulin, Kunitz and NTR domain-containing protein 1 (552 aa).

The first 25 residues, 1 to 25, serve as a signal peptide directing secretion; it reads MPAPQPLLPLLFAFVLIHLTSETNL. Residues 29-82 enclose the WAP domain; that stretch reads PGSHPGMCPNQLSPHLWVDAQSTCERECTRDQDCAASEKCCTNVCGLQSCVAAR. 17 disulfides stabilise this stretch: cysteine 36–cysteine 69, cysteine 52–cysteine 73, cysteine 56–cysteine 68, cysteine 62–cysteine 78, cysteine 120–cysteine 150, cysteine 124–cysteine 143, cysteine 132–cysteine 161, cysteine 211–cysteine 267, cysteine 303–cysteine 355, cysteine 310–cysteine 338, cysteine 330–cysteine 351, cysteine 363–cysteine 413, cysteine 372–cysteine 396, cysteine 388–cysteine 409, cysteine 421–cysteine 493, cysteine 424–cysteine 495, and cysteine 435–cysteine 544. Residues 112–163 form the Kazal-like domain; sequence WDGQPVCRCRDRCEKEPSFTCASDGLTYYNRCYMDAEACLRGLHLHVVPCKH. An Ig-like C2-type domain is found at 190 to 283; that stretch reads PALYNSPSPQ…GLLRADFPLS (94 aa). 2 consecutive BPTI/Kunitz inhibitor domains span residues 289-355 and 363-413; these read TTQD…QQAC and CALP…EDAC. An NTR domain is found at 413 to 544; the sequence is CPVPRTPPCR…IVELLEKKAC (132 aa). Asparagine 497 carries N-linked (GlcNAc...) asparagine glycosylation.

Belongs to the WFIKKN family. Preferentially expressed in the developing inner ear and the dorsal neural tube.

The protein localises to the secreted. Functionally, protease-inhibitor that contains multiple distinct protease inhibitor domains. Probably has serine protease- and metalloprotease-inhibitor activity. This chain is WAP, Kazal, immunoglobulin, Kunitz and NTR domain-containing protein 1 (Wfikkn1), found in Rattus norvegicus (Rat).